A 321-amino-acid polypeptide reads, in one-letter code: Thylakoid-associated protein sll1697 (321 aa).

It is found in the cellular thylakoid membrane. In Synechocystis sp. (strain ATCC 27184 / PCC 6803 / Kazusa), this protein is Thylakoid-associated protein sll1697.